We begin with the raw amino-acid sequence, 49 residues long: Small ribosomal subunit protein eS31 (49 aa).

C21, C24, C39, and C42 together coordinate Zn(2+). The C4-type zinc finger occupies 21-42 (CPRCGNGVFLAEHEDRMSCGRC).

This sequence belongs to the eukaryotic ribosomal protein eS31 family. Part of the 30S ribosomal subunit. It depends on Zn(2+) as a cofactor.

The chain is Small ribosomal subunit protein eS31 from Methanothrix thermoacetophila (strain DSM 6194 / JCM 14653 / NBRC 101360 / PT) (Methanosaeta thermophila).